The sequence spans 466 residues: Soluble pyridine nucleotide transhydrogenase (466 aa).

36–45 provides a ligand contact to FAD; the sequence is EKESSVGGGC.

This sequence belongs to the class-I pyridine nucleotide-disulfide oxidoreductase family. Requires FAD as cofactor.

Its subcellular location is the cytoplasm. It carries out the reaction NAD(+) + NADPH = NADH + NADP(+). Conversion of NADPH, generated by peripheral catabolic pathways, to NADH, which can enter the respiratory chain for energy generation. The polypeptide is Soluble pyridine nucleotide transhydrogenase (Vibrio atlanticus (strain LGP32) (Vibrio splendidus (strain Mel32))).